Reading from the N-terminus, the 458-residue chain is N-acetylgalactosamine kinase (458 aa).

Alpha-D-galactose is bound by residues Arg-43, Glu-49, His-50, and Asp-52. Positions 143, 145, and 146 each coordinate ATP. Asp-190 provides a ligand contact to alpha-D-galactose. The active-site Proton acceptor is the Asp-190. Asn-233 and Lys-234 together coordinate ATP.

It belongs to the GHMP kinase family. GalK subfamily. Monomer.

It carries out the reaction N-acetyl-alpha-D-galactosamine + ATP = N-acetyl-alpha-D-galactosamine 1-phosphate + ADP + H(+). Functionally, acts on GalNAc. Also acts as a galactokinase when galactose is present at high concentrations. This Mus musculus (Mouse) protein is N-acetylgalactosamine kinase (Galk2).